Here is a 173-residue protein sequence, read N- to C-terminus: Photosystem I assembly protein Ycf3 (173 aa).

TPR repeat units lie at residues 35-68 (AYVY…EESP), 72-105 (SETL…NSNQ), and 120-153 (GRTA…YPGG).

This sequence belongs to the Ycf3 family.

Its subcellular location is the cellular thylakoid membrane. Essential for the assembly of the photosystem I (PSI) complex. May act as a chaperone-like factor to guide the assembly of the PSI subunits. This is Photosystem I assembly protein Ycf3 from Prochlorococcus marinus (strain MIT 9303).